Here is a 316-residue protein sequence, read N- to C-terminus: Methionyl-tRNA formyltransferase (316 aa).

110 to 113 provides a ligand contact to (6S)-5,6,7,8-tetrahydrofolate; the sequence is SLLP.

The protein belongs to the Fmt family.

It carries out the reaction L-methionyl-tRNA(fMet) + (6R)-10-formyltetrahydrofolate = N-formyl-L-methionyl-tRNA(fMet) + (6S)-5,6,7,8-tetrahydrofolate + H(+). Its function is as follows. Attaches a formyl group to the free amino group of methionyl-tRNA(fMet). The formyl group appears to play a dual role in the initiator identity of N-formylmethionyl-tRNA by promoting its recognition by IF2 and preventing the misappropriation of this tRNA by the elongation apparatus. In Halothermothrix orenii (strain H 168 / OCM 544 / DSM 9562), this protein is Methionyl-tRNA formyltransferase.